The primary structure comprises 1052 residues: Carbamoyl phosphate synthase large chain (1052 aa).

A carboxyphosphate synthetic domain region spans residues 1–399 (MRENVKRVLV…ALQKAVRMLD (399 aa)). The ATP site is built by arginine 127, arginine 167, glycine 173, glycine 174, lysine 206, leucine 208, glutamate 213, glycine 239, valine 240, histidine 241, glutamine 282, and glutamate 296. An ATP-grasp 1 domain is found at 131–325 (RETMINVNLP…LAYVSAKLAL (195 aa)). Mg(2+) contacts are provided by glutamine 282, glutamate 296, and asparagine 298. 3 residues coordinate Mn(2+): glutamine 282, glutamate 296, and asparagine 298. Residues 400 to 548 (LGEPGIIGGK…VTYNGTEDDI (149 aa)) are oligomerization domain. The interval 549 to 930 (EFSNGIRKLL…LKSWLSSSPN (382 aa)) is carbamoyl phosphate synthetic domain. An ATP-grasp 2 domain is found at 674–864 (SRLLDKLGIK…IIDLALTGVI (191 aa)). ATP-binding residues include arginine 710, lysine 749, isoleucine 751, glutamate 756, glycine 780, valine 781, histidine 782, serine 783, glutamine 823, and glutamate 835. Positions 823, 835, and 837 each coordinate Mg(2+). 3 residues coordinate Mn(2+): glutamine 823, glutamate 835, and asparagine 837. The MGS-like domain occupies 930–1052 (NRLPDQKGIA…YEIGEYGAGI (123 aa)). The segment at 931-1052 (RLPDQKGIAL…YEIGEYGAGI (122 aa)) is allosteric domain.

The protein belongs to the CarB family. Composed of two chains; the small (or glutamine) chain promotes the hydrolysis of glutamine to ammonia, which is used by the large (or ammonia) chain to synthesize carbamoyl phosphate. Tetramer of heterodimers (alpha,beta)4. The cofactor is Mg(2+). It depends on Mn(2+) as a cofactor.

It carries out the reaction hydrogencarbonate + L-glutamine + 2 ATP + H2O = carbamoyl phosphate + L-glutamate + 2 ADP + phosphate + 2 H(+). The enzyme catalyses hydrogencarbonate + NH4(+) + 2 ATP = carbamoyl phosphate + 2 ADP + phosphate + 2 H(+). The protein operates within amino-acid biosynthesis; L-arginine biosynthesis; carbamoyl phosphate from bicarbonate: step 1/1. Its pathway is pyrimidine metabolism; UMP biosynthesis via de novo pathway; (S)-dihydroorotate from bicarbonate: step 1/3. Its function is as follows. Large subunit of the glutamine-dependent carbamoyl phosphate synthetase (CPSase). CPSase catalyzes the formation of carbamoyl phosphate from the ammonia moiety of glutamine, carbonate, and phosphate donated by ATP, constituting the first step of 2 biosynthetic pathways, one leading to arginine and/or urea and the other to pyrimidine nucleotides. The large subunit (synthetase) binds the substrates ammonia (free or transferred from glutamine from the small subunit), hydrogencarbonate and ATP and carries out an ATP-coupled ligase reaction, activating hydrogencarbonate by forming carboxy phosphate which reacts with ammonia to form carbamoyl phosphate. The sequence is that of Carbamoyl phosphate synthase large chain from Sulfolobus acidocaldarius (strain ATCC 33909 / DSM 639 / JCM 8929 / NBRC 15157 / NCIMB 11770).